Consider the following 132-residue polypeptide: uncharacterized protein (132 aa).

This is an uncharacterized protein from Caenorhabditis elegans.